Here is a 175-residue protein sequence, read N- to C-terminus: MDRAAKADLVATLNGVFSTTSLVVVAHYKGLTVADMQKLRSQMKQAGATVKVAKNRLANIALDGTDVASIKPLLKGPTLLAYSSDPVAAAKVAVDFAKANDKLVILGGAMGATALNPDGVKALATLPSLDELRAKIVGLVQAPATKIAQVVNAPAAKLARVFGAYADSAKTDEAA.

The protein belongs to the universal ribosomal protein uL10 family. Part of the ribosomal stalk of the 50S ribosomal subunit. The N-terminus interacts with L11 and the large rRNA to form the base of the stalk. The C-terminus forms an elongated spine to which L12 dimers bind in a sequential fashion forming a multimeric L10(L12)X complex.

In terms of biological role, forms part of the ribosomal stalk, playing a central role in the interaction of the ribosome with GTP-bound translation factors. This is Large ribosomal subunit protein uL10 from Methylobacterium nodulans (strain LMG 21967 / CNCM I-2342 / ORS 2060).